Consider the following 173-residue polypeptide: Putative metal-dependent hydrolase BCG9842_B2589 (173 aa).

Zn(2+) is bound by residues histidine 65, histidine 156, and histidine 160.

This sequence belongs to the metal hydrolase YfiT family. Homodimer. Zn(2+) is required as a cofactor.

It is found in the cytoplasm. Functionally, possible metal-dependent hydrolase. The polypeptide is Putative metal-dependent hydrolase BCG9842_B2589 (Bacillus cereus (strain G9842)).